The sequence spans 447 residues: Glucose-6-phosphate isomerase (447 aa).

Glu289 acts as the Proton donor in catalysis. Residues His310 and Lys424 contribute to the active site.

Belongs to the GPI family.

It localises to the cytoplasm. The catalysed reaction is alpha-D-glucose 6-phosphate = beta-D-fructose 6-phosphate. Its pathway is carbohydrate biosynthesis; gluconeogenesis. The protein operates within carbohydrate degradation; glycolysis; D-glyceraldehyde 3-phosphate and glycerone phosphate from D-glucose: step 2/4. Catalyzes the reversible isomerization of glucose-6-phosphate to fructose-6-phosphate. The protein is Glucose-6-phosphate isomerase of Parabacteroides distasonis (strain ATCC 8503 / DSM 20701 / CIP 104284 / JCM 5825 / NCTC 11152).